The sequence spans 120 residues: Anti-adapter protein IraM (120 aa).

Belongs to the IraM/RssC family.

The protein resides in the cytoplasm. Functionally, involved in the stabilization of the sigma stress factor RpoS. This Salmonella typhimurium (strain LT2 / SGSC1412 / ATCC 700720) protein is Anti-adapter protein IraM.